A 151-amino-acid chain; its full sequence is MKQIDLKILDKRIGTEFPLPTYATTGSAGLDLRALIEQPLTVEAGQTVLIPTGISVYIADPNLAAVILPRSGLGHKNGIVLGNLIGLIDSDYQGPLMVSLWNRSDKPFTVEVGDRIAQLVFVPVVQAQFNIVEEFTATDRGEGGFGHSGKQ.

Substrate is bound by residues 70–72, asparagine 83, 87–89, and methionine 97; these read RSG and LID.

Belongs to the dUTPase family. The cofactor is Mg(2+).

The catalysed reaction is dUTP + H2O = dUMP + diphosphate + H(+). It participates in pyrimidine metabolism; dUMP biosynthesis; dUMP from dCTP (dUTP route): step 2/2. This enzyme is involved in nucleotide metabolism: it produces dUMP, the immediate precursor of thymidine nucleotides and it decreases the intracellular concentration of dUTP so that uracil cannot be incorporated into DNA. The chain is Deoxyuridine 5'-triphosphate nucleotidohydrolase from Glaesserella parasuis serovar 5 (strain SH0165) (Haemophilus parasuis).